Consider the following 238-residue polypeptide: Ribosomal RNA small subunit methyltransferase G (238 aa).

Residues glycine 78, 129-130 (AE), and arginine 148 each bind S-adenosyl-L-methionine.

This sequence belongs to the methyltransferase superfamily. RNA methyltransferase RsmG family.

Its subcellular location is the cytoplasm. In terms of biological role, specifically methylates the N7 position of a guanine in 16S rRNA. In Caldicellulosiruptor bescii (strain ATCC BAA-1888 / DSM 6725 / KCTC 15123 / Z-1320) (Anaerocellum thermophilum), this protein is Ribosomal RNA small subunit methyltransferase G.